A 303-amino-acid chain; its full sequence is Ribosomal RNA small subunit methyltransferase H (303 aa).

Residues 32 to 34, D52, F78, D99, and Q106 each bind S-adenosyl-L-methionine; that span reads GGH.

It belongs to the methyltransferase superfamily. RsmH family.

Its subcellular location is the cytoplasm. The catalysed reaction is cytidine(1402) in 16S rRNA + S-adenosyl-L-methionine = N(4)-methylcytidine(1402) in 16S rRNA + S-adenosyl-L-homocysteine + H(+). Its function is as follows. Specifically methylates the N4 position of cytidine in position 1402 (C1402) of 16S rRNA. The protein is Ribosomal RNA small subunit methyltransferase H of Acinetobacter baylyi (strain ATCC 33305 / BD413 / ADP1).